A 302-amino-acid polypeptide reads, in one-letter code: Putative gluconeogenesis factor (302 aa).

This sequence belongs to the gluconeogenesis factor family.

The protein resides in the cytoplasm. Its function is as follows. Required for morphogenesis under gluconeogenic growth conditions. This chain is Putative gluconeogenesis factor (ybhK), found in Escherichia coli O157:H7.